A 277-amino-acid chain; its full sequence is Leucine-rich repeat-containing protein 10 (277 aa).

7 LRR repeats span residues 53–74 (ELVK…LGQL), 76–97 (NLQI…VCTL), 99–120 (QLCI…LSLL), 122–143 (NLRT…VCEL), 145–167 (LLKT…RRLQ), 168–189 (ELRT…LLHM), and 191–212 (FLEV…AHLS).

The protein localises to the nucleus. May play important roles in cardiac development and/or cardiac function. The sequence is that of Leucine-rich repeat-containing protein 10 (LRRC10) from Homo sapiens (Human).